The primary structure comprises 275 residues: uncharacterized protein (275 aa).

The span at 148–158 (TFPTTAPSITP) shows a compositional bias: polar residues. Positions 148–173 (TFPTTAPSITPGNKEGEKTTSTDTDE) are disordered. The helical transmembrane segment at 187 to 207 (ILIAVTLLLSGVAIIVFVIFE) threads the bilayer. The tract at residues 234–264 (GQPPGTAESKPDSQPQKVGQDAANSSNPKKA) is disordered. Polar residues predominate over residues 245-261 (DSQPQKVGQDAANSSNP).

The protein resides in the membrane. This is an uncharacterized protein from Homo sapiens (Human).